A 735-amino-acid chain; its full sequence is Alpha-adducin (735 aa).

Position 1 is an N-acetylmethionine (Met1). The span at 1–11 shows a compositional bias: low complexity; it reads MNGDTRAAVVT. Positions 1–21 are disordered; it reads MNGDTRAAVVTSPPPTTAPHK. The residue at position 12 (Ser12) is a Phosphoserine. Phosphoserine; by PKA is present on Ser59. Phosphoserine is present on Ser64. Thr331 bears the Phosphothreonine mark. Phosphoserine occurs at positions 334, 353, and 355. The residue at position 358 (Thr358) is a Phosphothreonine. A phosphoserine mark is found at Ser364 and Ser366. Position 408 is a phosphoserine; by PKA (Ser408). Disordered regions lie at residues 418–486 and 576–735; these read GHSF…SAVP and RREV…KSDS. The residue at position 427 (Ser427) is a Phosphoserine. Thr429 carries the phosphothreonine modification. Ser431 carries the post-translational modification Phosphoserine. Position 436 is a phosphoserine; by PKA (Ser436). Thr445 carries the phosphothreonine; by ROCK2 modification. Phosphoserine is present on residues Ser464 and Ser465. Thr480 is modified (phosphothreonine; by ROCK2). At Ser481 the chain carries Phosphoserine; by PKA. The span at 576–601 shows a compositional bias: basic and acidic residues; that stretch reads RREVERKQKGSEENLDETREQKEKSP. A phosphoserine mark is found at Ser586, Ser600, and Ser605. Phosphothreonine is present on Thr610. Ser613 is modified (phosphoserine). The residue at position 614 (Thr614) is a Phosphothreonine. A compositionally biased stretch (low complexity) spans 678–712; sequence EPASASAPGAEEVASPATEEGSPMDPGSDGSPGKS. Phosphoserine is present on residues Ser705, Ser708, and Ser712. A compositionally biased stretch (basic residues) spans 713–735; sequence PSKKKKKFRTPSFLKKSKKKSDS. Ser714 is modified (phosphoserine; by PKC). The tract at residues 715 to 732 is interaction with calmodulin; sequence KKKKKFRTPSFLKKSKKK. Ser724 is subject to Phosphoserine; by PKA and PKC.

It belongs to the aldolase class II family. Adducin subfamily. In terms of assembly, heterodimer of an alpha and a beta subunit or an alpha and a gamma subunit.

It localises to the cytoplasm. The protein resides in the cytoskeleton. It is found in the cell membrane. Membrane-cytoskeleton-associated protein that promotes the assembly of the spectrin-actin network. Binds to calmodulin. In Rattus norvegicus (Rat), this protein is Alpha-adducin (Add1).